Here is a 237-residue protein sequence, read N- to C-terminus: DNA repair protein RecO (237 aa).

Belongs to the RecO family.

Its function is as follows. Involved in DNA repair and RecF pathway recombination. This Actinobacillus succinogenes (strain ATCC 55618 / DSM 22257 / CCUG 43843 / 130Z) protein is DNA repair protein RecO.